Consider the following 97-residue polypeptide: Non-pathogenic pore-forming peptide amoebapore A (97 aa).

An N-terminal signal peptide occupies residues 1 to 20 (MKAIVFVLIFAVAFAVTLRQ). A Saposin B-type domain is found at 21-97 (GPIVCNLCTG…NAICAKIHAC (77 aa)). Cystine bridges form between cysteine 25/cysteine 97, cysteine 28/cysteine 91, and cysteine 55/cysteine 66.

As to quaternary structure, monomer. Homodimer. Hexamer; formed during insertion in the membrane.

It is found in the cytoplasmic granule. Its function is as follows. Forms pores in the cell membrane of host cells. Implicated in the cytolytic activity of the parasite. Pore forming activity is lower compared to the activity of ameobapore A from the pathogenic strain HM-1:IMSS. This chain is Non-pathogenic pore-forming peptide amoebapore A, found in Entamoeba histolytica.